Consider the following 457-residue polypeptide: UDP-N-acetylmuramoylalanine--D-glutamate ligase (457 aa).

117–123 (GTNGKST) lines the ATP pocket.

This sequence belongs to the MurCDEF family.

The protein resides in the cytoplasm. It carries out the reaction UDP-N-acetyl-alpha-D-muramoyl-L-alanine + D-glutamate + ATP = UDP-N-acetyl-alpha-D-muramoyl-L-alanyl-D-glutamate + ADP + phosphate + H(+). The protein operates within cell wall biogenesis; peptidoglycan biosynthesis. Cell wall formation. Catalyzes the addition of glutamate to the nucleotide precursor UDP-N-acetylmuramoyl-L-alanine (UMA). The chain is UDP-N-acetylmuramoylalanine--D-glutamate ligase from Paramagnetospirillum magneticum (strain ATCC 700264 / AMB-1) (Magnetospirillum magneticum).